The chain runs to 68 residues: Large ribosomal subunit protein bL31 (68 aa).

Zn(2+) is bound by residues Cys-16, Cys-18, Cys-37, and Cys-40.

It belongs to the bacterial ribosomal protein bL31 family. Type A subfamily. Part of the 50S ribosomal subunit. It depends on Zn(2+) as a cofactor.

In terms of biological role, binds the 23S rRNA. This chain is Large ribosomal subunit protein bL31, found in Acidithiobacillus ferrooxidans (strain ATCC 23270 / DSM 14882 / CIP 104768 / NCIMB 8455) (Ferrobacillus ferrooxidans (strain ATCC 23270)).